The primary structure comprises 514 residues: ATP synthase subunit alpha (514 aa).

An ATP-binding site is contributed by 170–177; sequence GDRQTGKT.

The protein belongs to the ATPase alpha/beta chains family. F-type ATPases have 2 components, CF(1) - the catalytic core - and CF(0) - the membrane proton channel. CF(1) has five subunits: alpha(3), beta(3), gamma(1), delta(1), epsilon(1). CF(0) has three main subunits: a(1), b(2) and c(9-12). The alpha and beta chains form an alternating ring which encloses part of the gamma chain. CF(1) is attached to CF(0) by a central stalk formed by the gamma and epsilon chains, while a peripheral stalk is formed by the delta and b chains.

Its subcellular location is the cell inner membrane. It carries out the reaction ATP + H2O + 4 H(+)(in) = ADP + phosphate + 5 H(+)(out). In terms of biological role, produces ATP from ADP in the presence of a proton gradient across the membrane. The alpha chain is a regulatory subunit. This chain is ATP synthase subunit alpha, found in Psychrobacter cryohalolentis (strain ATCC BAA-1226 / DSM 17306 / VKM B-2378 / K5).